A 377-amino-acid chain; its full sequence is Histidinol-phosphate aminotransferase (377 aa).

Lys-230 bears the N6-(pyridoxal phosphate)lysine mark.

Belongs to the class-II pyridoxal-phosphate-dependent aminotransferase family. Histidinol-phosphate aminotransferase subfamily. As to quaternary structure, homodimer. The cofactor is pyridoxal 5'-phosphate.

It catalyses the reaction L-histidinol phosphate + 2-oxoglutarate = 3-(imidazol-4-yl)-2-oxopropyl phosphate + L-glutamate. Its pathway is amino-acid biosynthesis; L-histidine biosynthesis; L-histidine from 5-phospho-alpha-D-ribose 1-diphosphate: step 7/9. The polypeptide is Histidinol-phosphate aminotransferase (Mycobacterium leprae (strain Br4923)).